The sequence spans 873 residues: F-BAR domain only protein 1 (873 aa).

The region spanning 1–248 (MSYFGEHFWG…NVENVTVDML (248 aa)) is the F-BAR domain. The interval 1-275 (MSYFGEHFWG…LDFDAYSSAA (275 aa)) is mediates membrane-binding. A disordered region spans residues 153 to 172 (RENTSQKEMDKAETKSKKAA). Residues 155–178 (NTSQKEMDKAETKSKKAADSLRRS) adopt a coiled-coil conformation. The tract at residues 267 to 439 (DFDAYSSAAL…KSLFGPPLES (173 aa)) is mediates interaction with the adaptor protein complex AP-2. 3 positions are modified to phosphoserine: serine 295, serine 343, and serine 368. The disordered stretch occupies residues 302-347 (SVDFLESDSGVPPEVDDEGFTVRPDISQNNGAEPPRFSSSDSDFDD). Disordered stretches follow at residues 381-600 (GSLI…RGPS) and 813-833 (SGHL…SPVA). The span at 447 to 466 (TGSSSLGFTSSPSPFSSSSP) shows a compositional bias: low complexity. A Phosphoserine modification is found at serine 518. Residues 567–576 (SLSPSPLGSS) show a composition bias toward low complexity. The mediates interaction with AGFG1, CALM, DAB2, EPS15, EPS15R, ITSN1 and clathrin stretch occupies residues 593–873 (HGISRGPSPV…FATGMYLVSC (281 aa)). Phosphoserine is present on serine 600. One can recognise an MHD domain in the interval 609–872 (ALPVATAFTE…RFATGMYLVS (264 aa)). Over residues 816–827 (LSASWQPQSGPS) the composition is skewed to polar residues.

It belongs to the FCHO family. As to quaternary structure, may oligomerize and form homotetramer. Interacts with AP2A2 and AP2B1; 2 subunits of the adaptor protein complex AP-2. Interacts with DAB2. Interacts with clathrin (CLTC or CLTCL1). Interacts with EPS15, EPS15R and ITSN1. Interacts with AGFG1 and CALM. May interact with ACVR1; linking this receptor to clathrin-mediated endocytosis. Mainly detected in brain and spleen.

The protein localises to the membrane. It localises to the clathrin-coated pit. Its function is as follows. Functions in an early step of clathrin-mediated endocytosis. Has both a membrane binding/bending activity and the ability to recruit proteins essential to the formation of functional clathrin-coated pits. May regulate Bmp signaling by regulating clathrin-mediated endocytosis of Bmp receptors. Involved in the regulation of T-cell poliferation and activation. Affects TCR clustering upon receptor triggering and modulates its internalisation, playing a role in TCR-dependent T-cell activation. This is F-BAR domain only protein 1 from Mus musculus (Mouse).